The following is a 169-amino-acid chain: Ribosome maturation factor RimM (169 aa).

A PRC barrel domain is found at glutamate 91–histidine 167.

Belongs to the RimM family. Binds ribosomal protein uS19.

The protein resides in the cytoplasm. Functionally, an accessory protein needed during the final step in the assembly of 30S ribosomal subunit, possibly for assembly of the head region. Essential for efficient processing of 16S rRNA. May be needed both before and after RbfA during the maturation of 16S rRNA. It has affinity for free ribosomal 30S subunits but not for 70S ribosomes. The polypeptide is Ribosome maturation factor RimM (Erythrobacter litoralis (strain HTCC2594)).